The following is a 351-amino-acid chain: MAKTASDISLTRQAMSLTEDLMTPNAAIYWADLTISAAVMWGGFLIAATTSSLALGLGAALLSMLALYRGLSFIHELTHIRDDEAPGFRVGWNVLVGVPLMTPSLMYEGVHNIHHIKDRFGTRLDPEYLPLSRFTPLKLAGFLFIALLAPLGVILRSAILIPLSFLVPSLRRYLKTKLSALIINPDFVREDLGRWRKAWVIQDVACWLWSWAVIAGLGLGVVPVRVVLTGLAIFSLATFLNQARTLVAHHWDNDGDKMTLEEQFLDSVNVPPPNLASALWAPVGLRYHALHHLLPRLPYHNMAKAHARLVEALGADSLYHRASEPGLFEALGDLFRRVRQKNAEARNQPAH.

4 helical membrane-spanning segments follow: residues 26-46 (AAIY…GFLI), 47-67 (AATT…MLAL), 141-161 (GFLF…AILI), and 204-224 (VACW…VVPV).

It belongs to the fatty acid desaturase type 1 family.

Its subcellular location is the cell inner membrane. It participates in lipid metabolism; sphingolipid metabolism. Involved in de novo bacterial ceramide synthesis. This Caulobacter vibrioides (strain NA1000 / CB15N) (Caulobacter crescentus) protein is Ceramide hydroxylase.